We begin with the raw amino-acid sequence, 1133 residues long: MRVSSIEAEMENPIDVDKTDVEGELKIKQVTLLRENIVKKIVFFLVAIFCSDRPSVLKKVFYEEVSKQEEATHVYVLASDLTDYIEEASLKENPEEGGEKSIYFVNRLQKYIYHKKQNKFRAIEYFIQGKSYSEIANNKPLATGRVDQLLAYYGKSEIEINVPSFLTLMWREFKKPINFLLYFGIIVWGIEQMYVSTAITVVFTTTINSLICIYIRGVMQKLKDACLNNTSVIVQRHNGQGYQEITVASNMIAPGDIVLFKREVTLPFDCVILEGSCQVTEANITGENVAIGKCQIPTDHHNDIFKYESSKSHTLFQGTQLMKIEDDILKVIVVRTGFGSYKGQIIRALLYPKPFNKKFQQQAVKLTILMATLLLIGFLSTLSRLLDIELPPLFIAFRFLDILIYSAPPGMPMLIAITNFVGLKRLKNNQILGQDPNSASQAGRIQTLCFDKTGTLTEDKVDLIGYQLKGQNQTFDKIQCQDPNNISIEHKLFSICHEVTKINNKLLGDLMDVKMAEFSTLDIDYDHEAKQHYSKSGNKRFYCIQVNQFHSEYQSMSVVCKEVDMITKEFKHYFFIKGSPEKIQSLSHVQSSEKAQLSTLINEGYRILGFGYKEIPQSEIDAFLDLSREQQEANVQSLGFLIYKNNLKPDTQEVIKEFKEACYNIKVISGDNPITTLKISQELEIVNRKNPTVIINFEETENVKSHLIITEIQPDNSTQVIDFSSAQNEQDYINKQMSYCCDAFLNNKSFCFSGKAHYYFQLKAKTDHISFKPEWVKMQDKSVQKIISFYQMLIINTNVFARTQPEQKQTIVRLLKESDQIVCMVGDGANDCSAIREADVGISFAEADGQFSSSYVSLSTSLSCVKRVLLEGRVNLSNSVEIFKGYLQVALLRYLGFLTLAYFYSSYSSGQMDWQALASGYFLVYLILGCNTPLKKLEKSVFDDNLFSIYNVTSVLFGFTLHILSIVGCVESLHASPIYKEVNSLDAENNFQFETQHNTVLNFNILINFFYVIISNHIGKPMKDRYYKNTIAIYYDLGLIYTCKCMILQVLLILEHTHHGLIFLILLLDQEFSSSLTVQVYFSLPMNLFLPEEFSLNFTQEVKKEKELLICNSSSTILEVDYNLRLNYFQQNF.

The Cytoplasmic segment spans residues 1-6 (MRVSSI). Residues 7–28 (EAEMENPIDVDKTDVEGELKIK) form a helical membrane-spanning segment. At 29–34 (QVTLLR) the chain is on the extracellular side. Residues 35–53 (ENIVKKIVFFLVAIFCSDR) form a helical membrane-spanning segment. Topologically, residues 54–167 (PSVLKKVFYE…IEINVPSFLT (114 aa)) are cytoplasmic. The helical transmembrane segment at 168-190 (LMWREFKKPINFLLYFGIIVWGI) threads the bilayer. Residues 191-193 (EQM) are Extracellular-facing. The chain crosses the membrane as a helical span at residues 194–212 (YVSTAITVVFTTTINSLIC). Topologically, residues 213–363 (IYIRGVMQKL…PFNKKFQQQA (151 aa)) are cytoplasmic. Residues 364 to 383 (VKLTILMATLLLIGFLSTLS) form a helical membrane-spanning segment. The Extracellular portion of the chain corresponds to 384–396 (RLLDIELPPLFIA). A helical transmembrane segment spans residues 397–418 (FRFLDILIYSAPPGMPMLIAIT). Over 419 to 887 (NFVGLKRLKN…NSVEIFKGYL (469 aa)) the chain is Cytoplasmic. The active-site 4-aspartylphosphate intermediate is Asp-451. Positions 827 and 831 each coordinate Mg(2+). Residues 888–906 (QVALLRYLGFLTLAYFYSS) form a helical membrane-spanning segment. Residues 907–915 (YSSGQMDWQ) are Extracellular-facing. Residues 916 to 931 (ALASGYFLVYLILGCN) traverse the membrane as a helical segment. The Cytoplasmic segment spans residues 932–948 (TPLKKLEKSVFDDNLFS). Residues 949-972 (IYNVTSVLFGFTLHILSIVGCVES) form a helical membrane-spanning segment. The Extracellular portion of the chain corresponds to 973–994 (LHASPIYKEVNSLDAENNFQFE). A helical membrane pass occupies residues 995–1018 (TQHNTVLNFNILINFFYVIISNHI). The Cytoplasmic portion of the chain corresponds to 1019 to 1030 (GKPMKDRYYKNT). The chain crosses the membrane as a helical span at residues 1031 to 1050 (IAIYYDLGLIYTCKCMILQV). The Extracellular segment spans residues 1051-1101 (LLILEHTHHGLIFLILLLDQEFSSSLTVQVYFSLPMNLFLPEEFSLNFTQE). The helical transmembrane segment at 1102–1124 (VKKEKELLICNSSSTILEVDYNL) threads the bilayer. Topologically, residues 1125 to 1133 (RLNYFQQNF) are cytoplasmic.

It belongs to the cation transport ATPase (P-type) (TC 3.A.3) family. Type V subfamily.

It localises to the membrane. The catalysed reaction is ATP + H2O = ADP + phosphate + H(+). This Tetrahymena thermophila protein is Probable cation-transporting ATPase 9 (TPA9).